The primary structure comprises 363 residues: Inositol-3-phosphate synthase (363 aa).

Residue Lys65 forms an Isoglutamyl lysine isopeptide (Lys-Gln) (interchain with Q-Cter in protein Pup) linkage. Residues Asp70, Ala129, Tyr149, Ser192, Asp227, and Lys240 each coordinate NAD(+).

The protein belongs to the myo-inositol 1-phosphate synthase family. NAD(+) serves as cofactor. In terms of processing, pupylated at Lys-65 by the prokaryotic ubiquitin-like protein Pup, which leads to its degradation by the proteasome.

The catalysed reaction is D-glucose 6-phosphate = 1D-myo-inositol 3-phosphate. In terms of biological role, key enzyme in myo-inositol biosynthesis pathway that catalyzes the conversion of glucose 6-phosphate to 1D-myo-inositol 3-phosphate in a NAD-dependent manner. In Mycolicibacterium smegmatis (strain ATCC 700084 / mc(2)155) (Mycobacterium smegmatis), this protein is Inositol-3-phosphate synthase (ino1).